We begin with the raw amino-acid sequence, 608 residues long: CTP synthase (608 aa).

The tract at residues 1–271 (MGQAHITKHI…DAYVVRRLGL (271 aa)) is amidoligase domain. Ser-18 serves as a coordination point for CTP. Residue Ser-18 coordinates UTP. ATP is bound by residues 19-24 (SLGKGL) and Asp-76. Residues Asp-76 and Glu-145 each contribute to the Mg(2+) site. Residues 152-154 (DIE), 192-197 (KTKPTQ), and Lys-228 contribute to the CTP site. Residues 192 to 197 (KTKPTQ) and Lys-228 contribute to the UTP site. The region spanning 296–545 (TIAIVGKYVD…VAAAVAHADR (250 aa)) is the Glutamine amidotransferase type-1 domain. Residue Gly-359 coordinates L-glutamine. Cys-386 (nucleophile; for glutamine hydrolysis) is an active-site residue. Residues 387–390 (LGLQ), Glu-410, and Arg-471 contribute to the L-glutamine site. Residues His-518 and Glu-520 contribute to the active site. The disordered stretch occupies residues 550 to 608 (LPVDLPSEDAPTPENGVPENGAAQTRGVTAGRSGGSIRRGASASRPSVSSNGTAALVSP). Residues 584–594 (GSIRRGASASR) are compositionally biased toward low complexity.

The protein belongs to the CTP synthase family. Homotetramer.

It carries out the reaction UTP + L-glutamine + ATP + H2O = CTP + L-glutamate + ADP + phosphate + 2 H(+). It catalyses the reaction L-glutamine + H2O = L-glutamate + NH4(+). The enzyme catalyses UTP + NH4(+) + ATP = CTP + ADP + phosphate + 2 H(+). The protein operates within pyrimidine metabolism; CTP biosynthesis via de novo pathway; CTP from UDP: step 2/2. With respect to regulation, allosterically activated by GTP, when glutamine is the substrate; GTP has no effect on the reaction when ammonia is the substrate. The allosteric effector GTP functions by stabilizing the protein conformation that binds the tetrahedral intermediate(s) formed during glutamine hydrolysis. Inhibited by the product CTP, via allosteric rather than competitive inhibition. Its function is as follows. Catalyzes the ATP-dependent amination of UTP to CTP with either L-glutamine or ammonia as the source of nitrogen. Regulates intracellular CTP levels through interactions with the four ribonucleotide triphosphates. This chain is CTP synthase, found in Frankia casuarinae (strain DSM 45818 / CECT 9043 / HFP020203 / CcI3).